The chain runs to 1169 residues: Pesticidal crystal protein Cry1Gb (1169 aa).

It belongs to the delta endotoxin family.

Its function is as follows. Promotes colloidosmotic lysis by binding to the midgut epithelial cells of lepidopteran larvae. Toxic to Pieris rapae. This chain is Pesticidal crystal protein Cry1Gb (cry1Gb), found in Bacillus thuringiensis subsp. wuhanensis.